We begin with the raw amino-acid sequence, 352 residues long: Membrane progestin receptor alpha (352 aa).

Residues 1 to 75 are Cytoplasmic-facing; the sequence is MATVVMEQIG…FLTLFQRHNE (75 aa). The chain crosses the membrane as a helical span at residues 76-96; the sequence is TLNVWTHLLAAFIILVKWQEI. Residues 97–110 are Extracellular-facing; sequence SETVDFLRDPHAQP. The helical transmembrane segment at 111–131 threads the bilayer; the sequence is LFIVLLAAFTYLSFSALAHLL. The Cytoplasmic portion of the chain corresponds to 132 to 139; the sequence is SAKSELSY. The helical transmembrane segment at 140–160 threads the bilayer; sequence YTFYFLDYVGVAVYQYGSALA. At 161–175 the chain is on the extracellular side; sequence HYYYAIEKEWHTKVQ. A helical membrane pass occupies residues 176–196; the sequence is GLFLPAAAFLAWLTCFGCCYG. Topologically, residues 197–242 are cytoplasmic; that stretch reads KYASPELPKVANKLFQVVPSALAYCLDISPVVHRIYSCYQEGCSDP. The chain crosses the membrane as a helical span at residues 243–263; sequence VVAYHFYHVVFFLIGAYFFCC. Residues 264 to 275 lie on the Extracellular side of the membrane; that stretch reads PHPESLFPGKCD. The chain crosses the membrane as a helical span at residues 276–296; the sequence is FIGQGHQLFHVFVVVCTLTQV. Residues 297–316 are Cytoplasmic-facing; sequence EALRTDFTERRPFYERLHGD. Residues 317-337 form a helical membrane-spanning segment; that stretch reads LAHDAVALFIFTACCSALTAF. The Extracellular segment spans residues 338-352; that stretch reads YVRQRVRASLHEKGE.

The protein belongs to the ADIPOR family. Strongly expressed in ovary and brain; lower expression in testis and pituitary. Not detected in heart, kidney, spleen, intestine, gill and muscle.

The protein localises to the cell membrane. Steroid membrane receptor. Binds progesterone, progestin and 17-hydroxyprogesterone in vitro. Capable of mediating progestin-induced oocyte maturation. The polypeptide is Membrane progestin receptor alpha (mpra) (Cynoscion nebulosus (Spotted seatrout)).